A 505-amino-acid chain; its full sequence is uncharacterized protein (505 aa).

The helical transmembrane segment at 11–27 threads the bilayer; that stretch reads IGIIGGGIVGWLAAIAL.

Its subcellular location is the membrane. This is an uncharacterized protein from Sinorhizobium fredii (strain NBRC 101917 / NGR234).